The primary structure comprises 146 residues: MKHIEIYTDGSCLNNPGFGGWAYILRYKEYQKEGFGAEANTTNNRMELMAIIESLKALKEPCEISLFTDSNLMVQSINEWLEGWIKKDFKGKKNIDLWKEYIKVAKSHKIKAFWVKAHNGHLENERCDTLAREAALKIARENDEKH.

The region spanning 1-136 (MKHIEIYTDG…CDTLAREAAL (136 aa)) is the RNase H type-1 domain. Mg(2+) is bound by residues aspartate 9, glutamate 47, aspartate 69, and aspartate 128.

The protein belongs to the RNase H family. As to quaternary structure, monomer. Mg(2+) is required as a cofactor.

The protein resides in the cytoplasm. The catalysed reaction is Endonucleolytic cleavage to 5'-phosphomonoester.. In terms of biological role, endonuclease that specifically degrades the RNA of RNA-DNA hybrids. The protein is Ribonuclease H of Campylobacter jejuni subsp. jejuni serotype O:23/36 (strain 81-176).